The chain runs to 481 residues: 3-isopropylmalate dehydratase large subunit (481 aa).

The [4Fe-4S] cluster site is built by Cys-357, Cys-417, and Cys-420. A compositionally biased stretch (polar residues) spans 429–441; it reads SPGQRCASTSNRN. A disordered region spans residues 429-451; sequence SPGQRCASTSNRNFEGRQGKGGR.

It belongs to the aconitase/IPM isomerase family. LeuC type 1 subfamily. Heterodimer of LeuC and LeuD. [4Fe-4S] cluster is required as a cofactor.

The enzyme catalyses (2R,3S)-3-isopropylmalate = (2S)-2-isopropylmalate. Its pathway is amino-acid biosynthesis; L-leucine biosynthesis; L-leucine from 3-methyl-2-oxobutanoate: step 2/4. Its function is as follows. Catalyzes the isomerization between 2-isopropylmalate and 3-isopropylmalate, via the formation of 2-isopropylmaleate. The protein is 3-isopropylmalate dehydratase large subunit of Mycobacterium sp. (strain KMS).